The primary structure comprises 239 residues: 7-cyano-7-deazaguanine synthase (239 aa).

ATP is bound at residue 13 to 23 (FSGGQDSTTCL). Residues Cys-192, Cys-201, Cys-204, and Cys-207 each contribute to the Zn(2+) site.

The protein belongs to the QueC family. The cofactor is Zn(2+).

It carries out the reaction 7-carboxy-7-deazaguanine + NH4(+) + ATP = 7-cyano-7-deazaguanine + ADP + phosphate + H2O + H(+). Its pathway is purine metabolism; 7-cyano-7-deazaguanine biosynthesis. Its function is as follows. Catalyzes the ATP-dependent conversion of 7-carboxy-7-deazaguanine (CDG) to 7-cyano-7-deazaguanine (preQ(0)). This Shewanella sp. (strain MR-4) protein is 7-cyano-7-deazaguanine synthase.